Here is a 143-residue protein sequence, read N- to C-terminus: Late embryogenesis abundant protein 1 (143 aa).

The span at Met-1–Gly-17 shows a compositional bias: low complexity. A disordered region spans residues Met-1 to Asp-143. Tandem repeats lie at residues Lys-47 to Glu-57, Lys-69 to Glu-79, Lys-80 to Glu-90, and Lys-91 to Glu-101. Composition is skewed to basic and acidic residues over residues Lys-47–Arg-60 and Lys-69–Asp-143. The tract at residues Lys-47–Glu-101 is 4 X 11 AA approximate repeats.

Belongs to the LEA type 4 family.

In terms of biological role, may be involved in defense against water stress. In Aphelenchoides avenae (Mycophagous nematode worm), this protein is Late embryogenesis abundant protein 1.